Reading from the N-terminus, the 2297-residue chain is Xin actin-binding repeat-containing protein 1 (2297 aa).

The segment covering 1 to 11 has biased composition (basic and acidic residues); sequence MAEVAKQKKAT. A disordered region spans residues 1 to 28; it reads MAEVAKQKKATEAVCGDEDFPPPPPPLP. Xin repeat units follow at residues 104 to 119, 139 to 154, 169 to 184, 208 to 223, 248 to 263, 286 to 301, 323 to 338, 362 to 377, and 396 to 411; these read GEVQ…WTLD, GDVK…STFD, GDVR…QPLD, GDVT…KPLD, GDVK…DPCC, SDFK…QPLD, GGVD…QPLD, ADVH…QPLS, and GNVG…QPMD. Basic and acidic residues predominate over residues 433 to 442; that stretch reads GEVQDKRMQF. The tract at residues 433–461 is disordered; it reads GEVQDKRMQFEKSTAGKTAGDSGNKVQND. Xin repeat units follow at residues 464-479, 494-509, 532-547, 570-585, 605-620, 638-653, 677-692, 715-730, 747-762, 779-794, 818-833, 856-871, 893-908, and 928-943; these read GDVK…LPLN, GDVK…TPLY, GNVQ…RPLD, DDTR…QPLD, SNVK…KPMD, ADVK…QPLD, VNVK…EPLD, GDVS…KSLG, GSVH…QPIG, GDVG…LSLD, VNVK…QPLY, GDVR…KPLD, GDVK…QPLD, and KCVQ…EQAS. S952 bears the Phosphoserine mark. 3 Xin repeats span residues 959-974, 997-1012, and 1033-1048; these read GDVR…QPID, GDVK…QSLD, and ADVK…TPLD. Disordered regions lie at residues 1617 to 1680, 1866 to 1900, 2147 to 2191, and 2243 to 2297; these read PSSH…KDQK, KENI…VPSI, SAAR…PRRK, and ELSS…TEKH. 2 stretches are compositionally biased toward low complexity: residues 1618 to 1630 and 1644 to 1656; these read SSHT…VSVT and SVSS…KNSS. Basic and acidic residues-rich tracts occupy residues 1876-1885 and 2151-2162; these read SNKDELHFTS and KPAESPTDKPKT. Low complexity predominate over residues 2166–2180; the sequence is QSNAGSSSSQNSSAS. Residues 2259–2278 show a composition bias toward polar residues; sequence GMTSPVLQRSGQSFSSNSLS.

The protein belongs to the Xin family. Expressed at intercalated disks in the heart (at protein level).

Its subcellular location is the cell junction. It is found in the adherens junction. The protein localises to the desmosome. In terms of biological role, positively regulates organization of the outer plexiform layer and Muller glia cells in the retina. May protect actin filaments from depolymerization. May play a role in development of normal skeletal muscle morphology and muscle fiber type composition. The chain is Xin actin-binding repeat-containing protein 1 from Danio rerio (Zebrafish).